The primary structure comprises 576 residues: Enolase 4 (576 aa).

Residues 187-232 (ELRNEAMSEAPPQATPTSAPAKDKKGNDKGKKGNITENPLPPAEPP) form a disordered region. The span at 196 to 206 (APPQATPTSAP) shows a compositional bias: low complexity. A compositionally biased stretch (basic and acidic residues) spans 207–217 (AKDKKGNDKGK). Residues E302 and K524 each contribute to the substrate site.

The protein belongs to the enolase family.

The catalysed reaction is (2R)-2-phosphoglycerate = phosphoenolpyruvate + H2O. Its pathway is carbohydrate degradation; glycolysis; pyruvate from D-glyceraldehyde 3-phosphate: step 4/5. The protein is Enolase 4 (eno4) of Danio rerio (Zebrafish).